A 372-amino-acid polypeptide reads, in one-letter code: UDP-N-acetylglucosamine--N-acetylmuramyl-(pentapeptide) pyrophosphoryl-undecaprenol N-acetylglucosamine transferase (372 aa).

UDP-N-acetyl-alpha-D-glucosamine contacts are provided by residues 14–16, Asn128, Arg169, Ser201, Ile257, and Gln302; that span reads TGG.

This sequence belongs to the glycosyltransferase 28 family. MurG subfamily.

The protein localises to the cell inner membrane. It catalyses the reaction di-trans,octa-cis-undecaprenyl diphospho-N-acetyl-alpha-D-muramoyl-L-alanyl-D-glutamyl-meso-2,6-diaminopimeloyl-D-alanyl-D-alanine + UDP-N-acetyl-alpha-D-glucosamine = di-trans,octa-cis-undecaprenyl diphospho-[N-acetyl-alpha-D-glucosaminyl-(1-&gt;4)]-N-acetyl-alpha-D-muramoyl-L-alanyl-D-glutamyl-meso-2,6-diaminopimeloyl-D-alanyl-D-alanine + UDP + H(+). It functions in the pathway cell wall biogenesis; peptidoglycan biosynthesis. Cell wall formation. Catalyzes the transfer of a GlcNAc subunit on undecaprenyl-pyrophosphoryl-MurNAc-pentapeptide (lipid intermediate I) to form undecaprenyl-pyrophosphoryl-MurNAc-(pentapeptide)GlcNAc (lipid intermediate II). The sequence is that of UDP-N-acetylglucosamine--N-acetylmuramyl-(pentapeptide) pyrophosphoryl-undecaprenol N-acetylglucosamine transferase from Bacteroides thetaiotaomicron (strain ATCC 29148 / DSM 2079 / JCM 5827 / CCUG 10774 / NCTC 10582 / VPI-5482 / E50).